We begin with the raw amino-acid sequence, 238 residues long: Ion-translocating oxidoreductase complex subunit E (238 aa).

The next 5 membrane-spanning stretches (helical) occupy residues Leu-41 to Val-61, Leu-71 to Ala-91, Glu-95 to Gly-115, Ser-130 to Leu-150, and Gly-184 to Leu-204.

Belongs to the NqrDE/RnfAE family. The complex is composed of six subunits: RnfA, RnfB, RnfC, RnfD, RnfE and RnfG.

It is found in the cell inner membrane. Part of a membrane-bound complex that couples electron transfer with translocation of ions across the membrane. The chain is Ion-translocating oxidoreductase complex subunit E from Pseudomonas aeruginosa (strain UCBPP-PA14).